Reading from the N-terminus, the 74-residue chain is ATP synthase subunit 9, mitochondrial (74 aa).

Transmembrane regions (helical) follow at residues 16–36 and 50–70; these read GLIG…IGVS and ILGF…AFLL.

The protein belongs to the ATPase C chain family. As to quaternary structure, F-type ATPases have 2 components, CF(1) - the catalytic core - and CF(0) - the membrane proton channel. CF(1) has five subunits: alpha(3), beta(3), gamma(1), delta(1), epsilon(1). CF(0) has three main subunits: a, b and c.

The protein localises to the mitochondrion inner membrane. Its function is as follows. Mitochondrial membrane ATP synthase (F(1)F(0) ATP synthase or Complex V) produces ATP from ADP in the presence of a proton gradient across the membrane which is generated by electron transport complexes of the respiratory chain. F-type ATPases consist of two structural domains, F(1) - containing the extramembraneous catalytic core and F(0) - containing the membrane proton channel, linked together by a central stalk and a peripheral stalk. During catalysis, ATP synthesis in the catalytic domain of F(1) is coupled via a rotary mechanism of the central stalk subunits to proton translocation. Part of the complex F(0) domain. A homomeric c-ring of probably 10 subunits is part of the complex rotary element. This Neurospora crassa (strain ATCC 24698 / 74-OR23-1A / CBS 708.71 / DSM 1257 / FGSC 987) protein is ATP synthase subunit 9, mitochondrial (atp-9).